The sequence spans 206 residues: Oligoribonuclease (206 aa).

The region spanning 20–183 (LVWLDMEMTG…ADIHESIDEL (164 aa)) is the Exonuclease domain. Residue Tyr141 is part of the active site.

The protein belongs to the oligoribonuclease family.

Its subcellular location is the cytoplasm. Its function is as follows. 3'-to-5' exoribonuclease specific for small oligoribonucleotides. In Burkholderia lata (strain ATCC 17760 / DSM 23089 / LMG 22485 / NCIMB 9086 / R18194 / 383), this protein is Oligoribonuclease.